The sequence spans 241 residues: 3-deoxy-D-manno-octulosonic acid kinase (241 aa).

Aspartate 171 is an active-site residue.

The protein belongs to the protein kinase superfamily. KdkA/RfaP family.

The protein localises to the cell inner membrane. It carries out the reaction an alpha-Kdo-(2-&gt;6)-lipid IVA + ATP = a 4-O-phospho-alpha-Kdo-(2-&gt;6)-lipid IVA + ADP + H(+). Its pathway is bacterial outer membrane biogenesis; LPS core biosynthesis. In terms of biological role, catalyzes the ATP-dependent phosphorylation of the 3-deoxy-D-manno-octulosonic acid (Kdo) residue in Kdo-lipid IV(A) at the 4-OH position. The chain is 3-deoxy-D-manno-octulosonic acid kinase from Haemophilus influenzae (strain 86-028NP).